A 306-amino-acid polypeptide reads, in one-letter code: D-alanine--D-alanine ligase (306 aa).

Active-site residues include Glu-18 and Ser-150. The ATP-grasp domain occupies 104-303; it reads KMLWKAFGLP…FEQLVVKILE (200 aa). 134 to 189 lines the ATP pocket; the sequence is VAKLGLPLMVKPSLEGSSVGLTKVKAVEELKSAVEYALKFDNTILIEEWLAGDELT. Mg(2+) is bound by residues Asp-257, Glu-270, and Asn-272. Residue Ser-281 is part of the active site.

The protein belongs to the D-alanine--D-alanine ligase family. It depends on Mg(2+) as a cofactor. Mn(2+) is required as a cofactor.

It is found in the cytoplasm. It carries out the reaction 2 D-alanine + ATP = D-alanyl-D-alanine + ADP + phosphate + H(+). It participates in cell wall biogenesis; peptidoglycan biosynthesis. In terms of biological role, cell wall formation. The sequence is that of D-alanine--D-alanine ligase from Haemophilus influenzae (strain ATCC 51907 / DSM 11121 / KW20 / Rd).